Reading from the N-terminus, the 480-residue chain is Glycogen synthase (480 aa).

It belongs to the glycosyltransferase 1 family. Bacterial/plant glycogen synthase subfamily.

The enzyme catalyses [(1-&gt;4)-alpha-D-glucosyl](n) + ADP-alpha-D-glucose = [(1-&gt;4)-alpha-D-glucosyl](n+1) + ADP + H(+). It functions in the pathway glycan biosynthesis; glycogen biosynthesis. In terms of biological role, synthesizes alpha-1,4-glucan chains using ADP-glucose. The sequence is that of Glycogen synthase from Rhizobium etli (strain ATCC 51251 / DSM 11541 / JCM 21823 / NBRC 15573 / CFN 42).